A 705-amino-acid polypeptide reads, in one-letter code: Frizzled-4 (705 aa).

The signal sequence occupies residues 1-22; sequence MKPTCILCLLVVILLHPRISKS. Residues 21 to 37 are compositionally biased toward low complexity; it reads KSSTSGNPSASSSSSSP. Residues 21–40 are disordered; sequence KSSTSGNPSASSSSSSPPEI. Residues 23–233 are Extracellular-facing; the sequence is STSGNPSASS…FTPAEKHLAE (211 aa). Positions 41–163 constitute an FZ domain; the sequence is PAFRQCETIR…NNHETMCMEG (123 aa). Disulfide bonds link C46–C107, C54–C100, C91–C130, C119–C160, and C123–C147. A glycan (N-linked (GlcNAc...) asparagine) is linked at N60. A helical transmembrane segment spans residues 234-254; sequence IWVSTWAYAALGLALVATVCL. The Cytoplasmic segment spans residues 255 to 270; sequence LASDGSRLASAKWSRL. A helical transmembrane segment spans residues 271-291; it reads LSPLIWCHNMVTLGWAVRFMV. Residues 292–322 are Extracellular-facing; it reads GRTGTACGTDPQAPNESLLTVDGLSNASCAS. N-linked (GlcNAc...) asparagine glycans are attached at residues N306 and N317. A helical transmembrane segment spans residues 323 to 343; that stretch reads VFLMRYYFGMAACAWWAVLCL. The Cytoplasmic portion of the chain corresponds to 344–386; the sequence is GWHRDIRRHSPDSKGHVVIPSNFGGSPAKRNSAKTAQQDLTQN. The chain crosses the membrane as a helical span at residues 387-407; the sequence is NFVCFVAWGLPAFQTSAVIVA. Residues 408–430 are Extracellular-facing; the sequence is RFVDADELLGACFVGNQSDKALQ. The N-linked (GlcNAc...) asparagine glycan is linked to N423. Residues 431–451 traverse the membrane as a helical segment; it reads ILVATPVFCYWIFGSMNLISG. Residues 452–483 lie on the Cytoplasmic side of the membrane; that stretch reads YLVHCRTKEILRNSNALSVQQQLQQLSAHSSS. The chain crosses the membrane as a helical span at residues 484–504; that stretch reads GIGIFLFIYGLACAMLLLAVI. At 505–529 the chain is on the extracellular side; that stretch reads YEFANIDVWLGSGDTNTPLWPFLLR. The helical transmembrane segment at 530-550 threads the bilayer; that stretch reads AFMELMLGICCFAWVLGPSIS. The Cytoplasmic portion of the chain corresponds to 551-705; that stretch reads TLYKRQVSNG…LQQYGNETLL (155 aa). The segment at 635–681 is disordered; the sequence is RSVHHQQRHSPHHHHHQQQQHHQFHPHHNHQHHSTSSHRLYYPPGSY. A compositionally biased stretch (basic residues) spans 636–670; sequence SVHHQQRHSPHHHHHQQQQHHQFHPHHNHQHHSTS. A PDZ-binding motif is present at residues 703–705; the sequence is TLL.

This sequence belongs to the G-protein coupled receptor Fz/Smo family.

It is found in the membrane. In terms of biological role, receptor for Wnt proteins. Most of frizzled receptors are coupled to the beta-catenin canonical signaling pathway, which leads to the activation of disheveled proteins, inhibition of GSK-3 kinase, nuclear accumulation of beta-catenin and activation of Wnt target genes. A second signaling pathway involving PKC and calcium fluxes has been seen for some family members, but it is not yet clear if it represents a distinct pathway or if it can be integrated in the canonical pathway, as PKC seems to be required for Wnt-mediated inactivation of GSK-3 kinase. Both pathways seem to involve interactions with G-proteins. May be involved in transduction and intercellular transmission of polarity information during tissue morphogenesis and/or in differentiated tissues. Required to coordinate the cytoskeletons of epidermal cells to produce a parallel array of cuticular hairs and bristles. The polypeptide is Frizzled-4 (fz4) (Drosophila melanogaster (Fruit fly)).